A 167-amino-acid chain; its full sequence is Large ribosomal subunit protein bL9 (167 aa).

The protein belongs to the bacterial ribosomal protein bL9 family.

Its function is as follows. Binds to the 23S rRNA. The sequence is that of Large ribosomal subunit protein bL9 from Chlamydia trachomatis serovar L2 (strain ATCC VR-902B / DSM 19102 / 434/Bu).